The sequence spans 387 residues: Erythronate-4-phosphate dehydrogenase (387 aa).

Substrate contacts are provided by S45 and T67. NAD(+) is bound at residue D147. R208 is an active-site residue. D232 provides a ligand contact to NAD(+). Residue E237 is part of the active site. Residue H254 is the Proton donor of the active site. Position 257 (G257) interacts with NAD(+). Y258 lines the substrate pocket.

Belongs to the D-isomer specific 2-hydroxyacid dehydrogenase family. PdxB subfamily. Homodimer.

It is found in the cytoplasm. It carries out the reaction 4-phospho-D-erythronate + NAD(+) = (R)-3-hydroxy-2-oxo-4-phosphooxybutanoate + NADH + H(+). The protein operates within cofactor biosynthesis; pyridoxine 5'-phosphate biosynthesis; pyridoxine 5'-phosphate from D-erythrose 4-phosphate: step 2/5. Functionally, catalyzes the oxidation of erythronate-4-phosphate to 3-hydroxy-2-oxo-4-phosphonooxybutanoate. The protein is Erythronate-4-phosphate dehydrogenase of Shewanella violacea (strain JCM 10179 / CIP 106290 / LMG 19151 / DSS12).